Reading from the N-terminus, the 277-residue chain is Probable endonuclease 4 (277 aa).

Residues His67, His107, Glu142, Asp176, His179, His211, Asp224, His226, and Glu256 each coordinate Zn(2+).

Belongs to the AP endonuclease 2 family. Zn(2+) is required as a cofactor.

It catalyses the reaction Endonucleolytic cleavage to 5'-phosphooligonucleotide end-products.. Endonuclease IV plays a role in DNA repair. It cleaves phosphodiester bonds at apurinic or apyrimidinic (AP) sites, generating a 3'-hydroxyl group and a 5'-terminal sugar phosphate. The sequence is that of Probable endonuclease 4 from Akkermansia muciniphila (strain ATCC BAA-835 / DSM 22959 / JCM 33894 / BCRC 81048 / CCUG 64013 / CIP 107961 / Muc).